A 313-amino-acid polypeptide reads, in one-letter code: Ornithine carbamoyltransferase (313 aa).

Residues 57-60 (STRT), Arg108, and 135-138 (HPTQ) contribute to the carbamoyl phosphate site. L-ornithine contacts are provided by residues Asn167, Asp231, and 235–236 (SM). Residues 272–273 (CL) and Arg300 contribute to the carbamoyl phosphate site.

The protein belongs to the aspartate/ornithine carbamoyltransferase superfamily. OTCase family.

The protein localises to the cytoplasm. It carries out the reaction carbamoyl phosphate + L-ornithine = L-citrulline + phosphate + H(+). It participates in amino-acid biosynthesis; L-arginine biosynthesis; L-arginine from L-ornithine and carbamoyl phosphate: step 1/3. Its function is as follows. Reversibly catalyzes the transfer of the carbamoyl group from carbamoyl phosphate (CP) to the N(epsilon) atom of ornithine (ORN) to produce L-citrulline. The sequence is that of Ornithine carbamoyltransferase from Thermotoga maritima (strain ATCC 43589 / DSM 3109 / JCM 10099 / NBRC 100826 / MSB8).